The sequence spans 464 residues: ATP synthase subunit beta 2 (464 aa).

147-154 (GGAGVGKT) is an ATP binding site.

It belongs to the ATPase alpha/beta chains family. In terms of assembly, F-type ATPases have 2 components, CF(1) - the catalytic core - and CF(0) - the membrane proton channel. CF(1) has five subunits: alpha(3), beta(3), gamma(1), delta(1), epsilon(1). CF(0) has four main subunits: a(1), b(1), b'(1) and c(9-12).

Its subcellular location is the cell inner membrane. The enzyme catalyses ATP + H2O + 4 H(+)(in) = ADP + phosphate + 5 H(+)(out). In terms of biological role, produces ATP from ADP in the presence of a proton gradient across the membrane. The catalytic sites are hosted primarily by the beta subunits. This is ATP synthase subunit beta 2 from Cereibacter sphaeroides (strain ATCC 17029 / ATH 2.4.9) (Rhodobacter sphaeroides).